The chain runs to 287 residues: Zinc transporter ZIP9 (287 aa).

The chain crosses the membrane as a helical span at residues 4–24; that stretch reads FLSISLLSLAMLVGCYVAGII. An N-linked (GlcNAc...) asparagine glycan is attached at asparagine 29. A run of 5 helical transmembrane segments spans residues 35–55, 107–127, 147–167, 177–197, and 211–231; these read LKLV…AVIV, AYIG…DQIG, ITTT…LGAA, LIVF…LVSF, and HLLV…LGLS. The N-linked (GlcNAc...) asparagine glycan is linked to asparagine 242. The chain crosses the membrane as a helical span at residues 245 to 265; the sequence is GVAMLFSAGTFLYVATVHVLP. A disordered region spans residues 268–287; it reads TSTNQSGSSLSPRPLPSGKN. Asparagine 271 is a glycosylation site (N-linked (GlcNAc...) asparagine). The span at 273-287 shows a compositional bias: low complexity; it reads SGSSLSPRPLPSGKN.

This sequence belongs to the ZIP transporter (TC 2.A.5) family.

The protein localises to the golgi apparatus. It localises to the trans-Golgi network membrane. The protein resides in the cell membrane. It is found in the cytoplasm. Its subcellular location is the perinuclear region. The protein localises to the mitochondrion. It localises to the nucleus. The enzyme catalyses Zn(2+)(in) = Zn(2+)(out). Its function is as follows. Transports zinc ions across cell and organelle membranes into the cytoplasm and regulates intracellular zinc homeostasis. Participates in the zinc ions efflux out of the secretory compartments. Regulates intracellular zinc level, resulting in the enhancement of AKT1 and MAPK3/MAPK1 (Erk1/2) phosphorylation in response to the BCR activation. Also functions as a membrane androgen receptor that mediates, through a G protein, the non-classical androgen signaling pathway, characterized by the activation of MAPK3/MAPK1 (Erk1/2) and transcription factors CREB1 or ATF1. This pathway contributes to CLDN1 and CLDN5 expression and tight junction formation between adjacent Sertoli cells. Mediates androgen-induced vascular endothelial cell proliferation through activation of an inhibitory G protein leading to the AKT1 and MAPK3/MAPK1 (Erk1/2) activation which in turn modulate inhibition (phosphorylation) of GSK3B and CCND1 transcription. Moreover, has dual functions as a membrane-bound androgen receptor and as an androgen-dependent zinc transporter both of which are mediated through an inhibitory G protein (Gi) that mediates both MAP kinase and zinc signaling leading to the androgen-dependent apoptotic process. The sequence is that of Zinc transporter ZIP9 from Rattus norvegicus (Rat).